We begin with the raw amino-acid sequence, 1039 residues long: MPSARPGSLKDPEIADLFNKHDPEKIFEDLREIGHGSFGAVYYARCNLTREIVAIKKMSYTGKQSQEKWQDILKEIRFLRQLNHPNTIEYKGCYLRESTAWLVMEYCVGSASDIIEVHKKPLHEDEIAAICLGVLSGLSYLHSLGRIHRDIKAGNILLTDNGVVKLADFGSAAIKCPANSFVGTPYWMAPEVILAMDEGQYDGKVDVWSLGITCIELAERKPPYFNMNAMSALYHIAQNESPTLPKNDWSDAFCSFVELCLKKMPAERPSSAKLLTHAYVTRPRSDTVLLELIARTKSAVRELDNLNYRKMKKILMVDTCETESAVGDTDDQQDDHAGGDSSKSNSITSEHSIHSVGVSAASSQSSSSNSIPAAAQNHHHIAAHHHQQAASAAVAAAMHHHHHPHQQPPPSWPSGQQGQPVPPGAVSRNSSRHRNRPPLPNIMHSMNNNVTPTNSASVVPAPAPAPVLPPPISVLPHLSAMGHVGGGGTGTGGSGGGSPASGGPLADRIQPVQPRYLTTPAAQAAVYAASSASSQQAISNAVNDHGPNNFATIRTTSIVTKQQKEHMQEEMHEQMSGYKRMRREHQAHLVKLEEKCKVDMEAHKTALDKEYDTLLHNFTRDLDRLETKHQQDVERRAKQTSAAEKKLHKEITLKQENDRKVYDLNRKKEYKANKERWKRELSMDESTPKRQRDLTLQSQKDNLKQHEAQEEQRMLQAQKQYIELEMRKFKRKRMIMQHEHEDQQLRDELGKKEQQLQQAHAMLLKHHEKTQELEYRQQKSVHQLREEQINKQHDTELHNQKDYMDRIKKELVRKHAVELRQQPKSLKQKELQIRKQFRETCKTQTKQYKRYKAQVLQTTPKEQQKEVIKQLKEEKHRKLTLLGEQYEQSIADMFQSQSYKLDESQVIECQRTHEQLEYELEMLTAYQNKNKKQAQEQRDRERRELENRVSVRRGLLENKMDAELQQFNQERAERLRMKHEKHTKELEAFDNESIALGFSTLSLIEVSREAYADEEGSLSGSMISLAHSNSSTSFPAGSL.

Residues 27–280 form the Protein kinase domain; the sequence is FEDLREIGHG…SAKLLTHAYV (254 aa). Residues 33-41 and K56 each bind ATP; that span reads IGHGSFGAV. The active-site Proton acceptor is D150. Disordered regions lie at residues 324–457, 485–508, 629–648, and 677–707; these read SAVG…NSAS, GGGGTGTGGSGGGSPASGGPLADR, HQQDVERRAKQTSAAEKKLH, and WKRELSMDESTPKRQRDLTLQSQKDNLKQHE. Residues 341 to 350 are compositionally biased toward polar residues; sequence SSKSNSITSE. A compositionally biased stretch (low complexity) spans 359–376; it reads SAASSQSSSSNSIPAAAQ. Basic residues predominate over residues 377–387; that stretch reads NHHHIAAHHHQ. Composition is skewed to low complexity over residues 388–397 and 413–429; these read QAASAAVAAA and PSGQQGQPVPPGAVSRN. Residues 444 to 454 are compositionally biased toward polar residues; it reads HSMNNNVTPTN. Over residues 485–500 the composition is skewed to gly residues; it reads GGGGTGTGGSGGGSPA. Coiled-coil stretches lie at residues 631 to 765 and 835 to 993; these read QDVE…MLLK and KQFR…DNES. Positions 677–693 are enriched in basic and acidic residues; the sequence is WKRELSMDESTPKRQRD.

It belongs to the protein kinase superfamily. STE Ser/Thr protein kinase family. STE20 subfamily. In terms of assembly, interacts with Schip1; the interaction enhances Tao kinase activity. Mg(2+) serves as cofactor. In terms of processing, autophosphorylated. In the posterior midgut, expressed in almost all intestinal cell types including intestinal stem cells and enterocytes (at protein level). Maternally expressed, ubiquitously distributed in the egg and early embryo and enriched in the germ plasm at the posterior pole of the early embryo including the pole cells.

The protein localises to the cytoplasm. Its subcellular location is the cytoskeleton. It localises to the spindle. It is found in the membrane. The protein resides in the perikaryon. The protein localises to the cell cortex. Its subcellular location is the cell projection. It localises to the axon. The enzyme catalyses L-seryl-[protein] + ATP = O-phospho-L-seryl-[protein] + ADP + H(+). It catalyses the reaction L-threonyl-[protein] + ATP = O-phospho-L-threonyl-[protein] + ADP + H(+). Its function is as follows. Serine/threonine-protein kinase which regulates the Hippo/SWH (Sav/Wts/Hpo) signaling pathway, a signaling pathway that plays a pivotal role in organ size control and tumor suppression by restricting proliferation and promoting apoptosis. The core of this pathway is composed of a kinase cascade wherein Hippo (hpo), in complex with its regulatory protein Salvador (sav), phosphorylates and activates Warts (wts) in complex with its regulatory protein Mats, which in turn phosphorylates and inactivates the Yorkie (yki) oncoprotein. In imaginal cells, phosphorylates and activates hpo and leads to repression of yki. In the midgut, negatively regulates the proliferation of intestinal stem cells through the Hippo/SWH pathway. Independent of the hippo/SWH pathway, regulates epithelial morphogenesis in follicle cells by promoting the endocytosis of Fas2 and reducing lateral adhesion between epithelial cells which, in turn, permits shrinking of the lateral membrane and initiates morphogenesis of the squamous epithelium. Required for the development of both the mushroom body and the ellipsoid body in the brain and may act as a negative regulator of the par-1 kinase. Negatively regulates the JNK pathway which increases sensitivity to ethanol exposure. Plays a role in the control of cell shape by negatively regulating the growth of microtubule plus-ends as they contact the actin-rich cell cortex. Required for the induction of apoptosis in pole cells by promoting expression of skl which enhances activity of the apoptosis activator hid. Induces in vitro expression of large, highly dynamic, microtubule-dependent lamellopodia-like cytoplasmic expansions which constantly probe the environment. In terms of biological role, induces in vitro expression of actin-dependent filopodia-like cytoplasmic protrusions which firmly attach to the substrate. Antagonizes the activity of isoform D. The chain is Serine/threonine-protein kinase Tao from Drosophila melanogaster (Fruit fly).